Reading from the N-terminus, the 719-residue chain is Photosystem I P700 chlorophyll a apoprotein A1 (719 aa).

8 helical membrane passes run 60 to 83 (IFSAHFGQLSIIFIWLSGMYFHGA), 146 to 169 (LYCTAIGALIFAGLMLFAGWFHYH), 185 to 209 (LNHHLAGLLGLGSLGWAGHQVHVSL), 281 to 299 (TAHHHIAIAVLFLIAGHMY), 336 to 359 (WHAQLAVNLAMLGSLTIIVAHHMY), 375 to 401 (LSLFTHHMWIGGFLVVGAAAHAAIFMV), 423 to 445 (AIISHLNWVCIFLGFHSFGLYIH), and 521 to 539 (FLVHHIHAFTIHVTVLILL). The [4Fe-4S] cluster site is built by C563 and C572. The next 2 helical transmembrane spans lie at 579-600 (HVFLGLFWMYNSISVVIFHFSW) and 654-676 (LSAYGLLFLGAHFVWAFSLMFLF). H665 is a chlorophyll a' binding site. Positions 673 and 681 each coordinate chlorophyll a. Residue W682 participates in phylloquinone binding. The helical transmembrane segment at 714-719 (AVGVAH) threads the bilayer.

Belongs to the PsaA/PsaB family. As to quaternary structure, the PsaA/B heterodimer binds the P700 chlorophyll special pair and subsequent electron acceptors. PSI consists of a core antenna complex that captures photons, and an electron transfer chain that converts photonic excitation into a charge separation. The eukaryotic PSI reaction center is composed of at least 11 subunits. P700 is a chlorophyll a/chlorophyll a' dimer, A0 is one or more chlorophyll a, A1 is one or both phylloquinones and FX is a shared 4Fe-4S iron-sulfur center. is required as a cofactor.

It is found in the plastid. Its subcellular location is the chloroplast thylakoid membrane. The enzyme catalyses reduced [plastocyanin] + hnu + oxidized [2Fe-2S]-[ferredoxin] = oxidized [plastocyanin] + reduced [2Fe-2S]-[ferredoxin]. Its function is as follows. PsaA and PsaB bind P700, the primary electron donor of photosystem I (PSI), as well as the electron acceptors A0, A1 and FX. PSI is a plastocyanin-ferredoxin oxidoreductase, converting photonic excitation into a charge separation, which transfers an electron from the donor P700 chlorophyll pair to the spectroscopically characterized acceptors A0, A1, FX, FA and FB in turn. Oxidized P700 is reduced on the lumenal side of the thylakoid membrane by plastocyanin. The polypeptide is Photosystem I P700 chlorophyll a apoprotein A1 (Equisetum palustre (Marsh horsetail)).